The sequence spans 133 residues: Large-conductance mechanosensitive channel (133 aa).

A run of 2 helical transmembrane segments spans residues 10–30 (FAVK…AAFG) and 76–96 (GIFV…FLVV).

This sequence belongs to the MscL family. In terms of assembly, homopentamer.

It localises to the cell inner membrane. In terms of biological role, channel that opens in response to stretch forces in the membrane lipid bilayer. May participate in the regulation of osmotic pressure changes within the cell. This Chlorobium phaeobacteroides (strain BS1) protein is Large-conductance mechanosensitive channel.